Reading from the N-terminus, the 377-residue chain is Probable tRNA pseudouridine synthase D (377 aa).

Asp89 (nucleophile) is an active-site residue. Residues 160 to 377 enclose the TRUD domain; sequence YLPAFIGYQR…ILRGDPRKFT (218 aa).

It belongs to the pseudouridine synthase TruD family.

It carries out the reaction uridine(13) in tRNA = pseudouridine(13) in tRNA. Its function is as follows. Could be responsible for synthesis of pseudouridine from uracil-13 in transfer RNAs. This chain is Probable tRNA pseudouridine synthase D, found in Saccharolobus solfataricus (strain ATCC 35092 / DSM 1617 / JCM 11322 / P2) (Sulfolobus solfataricus).